Consider the following 528-residue polypeptide: Poly(A) RNA polymerase GLD2 (528 aa).

2 disordered regions span residues 1-41 (MYPN…QPQQ) and 99-121 (RDQS…KRRS). Low complexity-rich tracts occupy residues 16–32 (PCEQ…EQPL) and 102–113 (SPLISPASPSSS). Mg(2+) is bound by residues Asp259 and Asp261. Residues 428 to 481 (LGDLLLGFLKYFAIEFDWSKDIISVREAKALPRSDDYEWRNKFICVEEPYDRTN) enclose the PAP-associated domain.

It belongs to the DNA polymerase type-B-like family. GLD2 subfamily. In terms of assembly, component of a complex at least composed of cpeb1, cpsf1, tent2/gld2, pabpc1/ePAB, parn and sympk. Following oocyte maturation, parn is expelled from the complex. Interacts with rbm9 and sympk. It depends on Mg(2+) as a cofactor. Mn(2+) is required as a cofactor.

It localises to the cytoplasm. It catalyses the reaction RNA(n) + ATP = RNA(n)-3'-adenine ribonucleotide + diphosphate. In terms of biological role, cytoplasmic poly(A) RNA polymerase that adds successive AMP monomers to the 3'-end of specific RNAs, forming a poly(A) tail. In contrast to the canonical nuclear poly(A) RNA polymerase, it only adds poly(A) to selected cytoplasmic mRNAs during oocyte maturation. Plays a central role during oocyte maturation by mediating polyadenylation of dormant mRNAs, which contain 5'AAUAAA-3' sequence in their 3'-UTR. In immature oocytes, polyadenylation of poly(A) tails is counteracted by the ribonuclease parn. During maturation parn is excluded from the ribonucleoprotein complex, allowing poly(A) elongation and activation of mRNAs. May not play a role in replication-dependent histone mRNA degradation. The sequence is that of Poly(A) RNA polymerase GLD2 (tent2) from Xenopus tropicalis (Western clawed frog).